The primary structure comprises 284 residues: uncharacterized protein (284 aa).

A signal peptide spans 1-23; that stretch reads MKRGCAIAVMICGLITSVSAASA.

It belongs to the surface antigen msp4 family.

This is an uncharacterized protein from Brucella suis biovar 1 (strain 1330).